Reading from the N-terminus, the 250-residue chain is Small ribosomal subunit protein uS2 (250 aa).

Belongs to the universal ribosomal protein uS2 family.

The protein is Small ribosomal subunit protein uS2 of Paracidovorax citrulli (strain AAC00-1) (Acidovorax citrulli).